The following is a 57-amino-acid chain: MTEQAAKPKGWFKRALEKYDNFIKEWGLDQPNCSCVPMSATEDENGNLKKKESSLKK.

This is an uncharacterized protein from Haemophilus influenzae (strain ATCC 51907 / DSM 11121 / KW20 / Rd).